A 519-amino-acid polypeptide reads, in one-letter code: MENRSDFEADDYGDISWSNWSNWSTPAGVLFSAMSSVLSASNHTPLPDFGQELALSTSSFNHSQTLSTDLPAVGDVEDAAEDAAASMETGSFAFVVPWWRQVLWSILFGGMVIVATGGNLIVVWIVMTTKRMRTVTNYFIVNLSIADAMVSSLNVTFNYYYMLDSDWPFGEFYCKLSQFIAMLSICASVFTLMAISIDRYVAIIRPLQPRMSKRCNLAIAAVIWLASTLISCPMMIIYRTEEVPVRGLSNRTVCYPEWPDGPTNHSTMESLYNILIIILTYFLPIVSMTVTYSRVGIELWGSKTIGECTPRQVENVRSKRRVVKMMIVVVLIFAICWLPFHSYFIITSCYPAITEAPFIQELYLAIYWLAMSNSMYNPIIYCWMNSRFRYGFKMVFRWCLFVRVGTEPFSRRENLTSRYSCSGSPDHNRIKRNDTQKSILYTCPSSPKSHRISHSGTGRSATLRNSLPAESLSSGGSGGGGHRKRLSYQQEMQQRWSGPNSATAVTNSSSTANTTQLLS.

The Extracellular segment spans residues 1 to 100; the sequence is MENRSDFEAD…SFAFVVPWWR (100 aa). N-linked (GlcNAc...) asparagine glycosylation is found at N3, N19, N22, and N61. A helical membrane pass occupies residues 101-123; sequence QVLWSILFGGMVIVATGGNLIVV. The Cytoplasmic portion of the chain corresponds to 124-134; the sequence is WIVMTTKRMRT. A helical transmembrane segment spans residues 135–155; the sequence is VTNYFIVNLSIADAMVSSLNV. Topologically, residues 156-175 are extracellular; it reads TFNYYYMLDSDWPFGEFYCK. Cysteines 174 and 254 form a disulfide. Residues 176-197 traverse the membrane as a helical segment; it reads LSQFIAMLSICASVFTLMAISI. The Cytoplasmic portion of the chain corresponds to 198-217; sequence DRYVAIIRPLQPRMSKRCNL. Residues 218–238 form a helical membrane-spanning segment; that stretch reads AIAAVIWLASTLISCPMMIIY. Residues 239–270 lie on the Extracellular side of the membrane; sequence RTEEVPVRGLSNRTVCYPEWPDGPTNHSTMES. The helical transmembrane segment at 271 to 292 threads the bilayer; it reads LYNILIIILTYFLPIVSMTVTY. Residues 293–324 lie on the Cytoplasmic side of the membrane; sequence SRVGIELWGSKTIGECTPRQVENVRSKRRVVK. A helical membrane pass occupies residues 325–346; that stretch reads MMIVVVLIFAICWLPFHSYFII. Residues 347-361 are Extracellular-facing; the sequence is TSCYPAITEAPFIQE. Residues 362–384 form a helical membrane-spanning segment; the sequence is LYLAIYWLAMSNSMYNPIIYCWM. Over 385 to 519 the chain is Cytoplasmic; it reads NSRFRYGFKM…STANTTQLLS (135 aa). C399 carries the S-palmitoyl cysteine lipid modification. Residues 444–519 are disordered; the sequence is PSSPKSHRIS…STANTTQLLS (76 aa). 2 stretches are compositionally biased toward polar residues: residues 454–465 and 487–499; these read HSGTGRSATLRN and SYQQEMQQRWSGP. Residues 500–519 are compositionally biased toward low complexity; sequence NSATAVTNSSSTANTTQLLS.

Belongs to the G-protein coupled receptor 1 family. As to expression, during late embryogenesis (stages 11-15), expressed in the brain and in a specific subset of neurons in each neuromere of the developing ventral ganglion. Expressed in the cortex of the adult brain, which contains the neuronal cell bodies.

Its subcellular location is the cell membrane. In terms of biological role, receptor for tachykinin-like peptides. The sequence is that of Tachykinin-like peptides receptor 99D (TkR99D) from Drosophila melanogaster (Fruit fly).